Reading from the N-terminus, the 492-residue chain is Phytoene desaturase (lycopene-forming) (492 aa).

Position 5–38 (5–38 (VVIGAGFGGLALAIRLQAAGIPTVLLEQRDKPGG)) interacts with FAD.

This sequence belongs to the carotenoid/retinoid oxidoreductase family. FAD is required as a cofactor.

The catalysed reaction is 15-cis-phytoene + 4 A = all-trans-lycopene + 4 AH2. The protein operates within carotenoid biosynthesis; lycopene biosynthesis. Functionally, this enzyme converts phytoene into lycopene via the intermediaries of phytofluene, zeta-carotene and neurosporene by the introduction of four double bonds. The sequence is that of Phytoene desaturase (lycopene-forming) (crtI) from Pseudescherichia vulneris (Escherichia vulneris).